Reading from the N-terminus, the 209-residue chain is Claudin-4 (209 aa).

Topologically, residues 1–9 (MASMGLQVT) are cytoplasmic. Positions 1-103 (MASMGLQVTG…GVLLSVVGGK (103 aa)) are interaction with EPHA2. The helical transmembrane segment at 10-30 (GIALAVLGWLAVMLCCALPMW) threads the bilayer. The Extracellular portion of the chain corresponds to 31-81 (RVTAFIGSNIVTSQTIWEGLWMNCVVQSTGQMQCKVYDSLLALPQDLQAAR). A disulfide bridge links cysteine 54 with cysteine 64. The helical transmembrane segment at 82–102 (ALVIISIIVAALGVLLSVVGG) threads the bilayer. The Cytoplasmic segment spans residues 103–117 (KCTNCLEDESAKAKT). Residues 118-138 (MIVAGVVFLLAGLLVIVPVSW) form a helical membrane-spanning segment. Residues 139–160 (TAHNIIQDFYNPLVASGQKREM) lie on the Extracellular side of the membrane. A helical membrane pass occupies residues 161–181 (GASLYVGWAASGLLLLGGGLL). Over 182-209 (CCNCPPRTDKPYSAKYSAARSAAASNYV) the chain is Cytoplasmic. The residue at position 208 (tyrosine 208) is a Phosphotyrosine; by EPHA2. The interactions with TJP1, TJP2 and TJP3 stretch occupies residues 208–209 (YV).

Belongs to the claudin family. As to quaternary structure, interacts with EPHA2; phosphorylates CLDN4 and may regulate tight junctions. Directly interacts with TJP1/ZO-1, TJP2/ZO-2 and TJP3/ZO-3. Interacts with CLDN1. Interacts with CLDN8. Phosphorylated. Phosphorylation by EPHA2 is stimulated by EFNA1 and alters interaction with TJP1.

It localises to the cell junction. The protein resides in the tight junction. Its subcellular location is the cell membrane. In terms of biological role, channel-forming tight junction protein that mediates paracellular chloride transport in the kidney. Plays a critical role in the paracellular reabsorption of filtered chloride in the kidney collecting ducts. Claudins play a major role in tight junction-specific obliteration of the intercellular space, through calcium-independent cell-adhesion activity. This chain is Claudin-4 (CLDN4), found in Chlorocebus aethiops (Green monkey).